The primary structure comprises 175 residues: MPNKEVLDNASLQRALTRITYEIIERNKGGKNLVLVGIKTRGEYLARRIADRLEQLEGVQIPVMAIDITNFRDDKPDQHNDLGLNSEERLNISEQNIVLIDDVLFTGRTIRAALDALIHIGRPKTISLAVLVDRGHRELPIRADFVGKNIPTAQNEKIKVFVQEIDGKDAVEIVH.

A PRPP-binding motif is present at residues 97–109 (IVLIDDVLFTGRT).

The protein belongs to the purine/pyrimidine phosphoribosyltransferase family. PyrR subfamily. As to quaternary structure, homodimer and homohexamer; in equilibrium.

It catalyses the reaction UMP + diphosphate = 5-phospho-alpha-D-ribose 1-diphosphate + uracil. Its function is as follows. Regulates transcriptional attenuation of the pyrimidine nucleotide (pyr) operon by binding in a uridine-dependent manner to specific sites on pyr mRNA. This disrupts an antiterminator hairpin in the RNA and favors formation of a downstream transcription terminator, leading to a reduced expression of downstream genes. Also displays a weak uracil phosphoribosyltransferase activity which is not physiologically significant. This is Bifunctional protein PyrR from Leuconostoc mesenteroides subsp. mesenteroides (strain ATCC 8293 / DSM 20343 / BCRC 11652 / CCM 1803 / JCM 6124 / NCDO 523 / NBRC 100496 / NCIMB 8023 / NCTC 12954 / NRRL B-1118 / 37Y).